Here is a 339-residue protein sequence, read N- to C-terminus: Anthranilate phosphoribosyltransferase (339 aa).

5-phospho-alpha-D-ribose 1-diphosphate is bound by residues G79, 82 to 83, S87, 89 to 92, 107 to 115, and S119; these read GD, NIST, and KHGNRSISS. An anthranilate-binding site is contributed by G79. Residue S91 participates in Mg(2+) binding. Residue N110 participates in anthranilate binding. Residue R165 coordinates anthranilate. D224 and E225 together coordinate Mg(2+).

This sequence belongs to the anthranilate phosphoribosyltransferase family. As to quaternary structure, homodimer. Requires Mg(2+) as cofactor.

The enzyme catalyses N-(5-phospho-beta-D-ribosyl)anthranilate + diphosphate = 5-phospho-alpha-D-ribose 1-diphosphate + anthranilate. It participates in amino-acid biosynthesis; L-tryptophan biosynthesis; L-tryptophan from chorismate: step 2/5. Catalyzes the transfer of the phosphoribosyl group of 5-phosphorylribose-1-pyrophosphate (PRPP) to anthranilate to yield N-(5'-phosphoribosyl)-anthranilate (PRA). The sequence is that of Anthranilate phosphoribosyltransferase from Listeria monocytogenes serotype 4b (strain CLIP80459).